The primary structure comprises 145 residues: 3-hydroxyacyl-[acyl-carrier-protein] dehydratase FabZ (145 aa).

His-50 is an active-site residue.

This sequence belongs to the thioester dehydratase family. FabZ subfamily.

It is found in the cytoplasm. The catalysed reaction is a (3R)-hydroxyacyl-[ACP] = a (2E)-enoyl-[ACP] + H2O. In terms of biological role, involved in unsaturated fatty acids biosynthesis. Catalyzes the dehydration of short chain beta-hydroxyacyl-ACPs and long chain saturated and unsaturated beta-hydroxyacyl-ACPs. The chain is 3-hydroxyacyl-[acyl-carrier-protein] dehydratase FabZ from Coxiella burnetii (strain CbuK_Q154) (Coxiella burnetii (strain Q154)).